Consider the following 299-residue polypeptide: Serine/threonine-protein kinase 1 (299 aa).

In terms of domain architecture, Protein kinase spans 39-277 (IATKPMFEGG…FKGLVSHPWF (239 aa)). ATP contacts are provided by residues 45–53 (FEGGRRNNV) and K66. The active-site Proton acceptor is the D153.

This sequence belongs to the protein kinase superfamily. Ser/Thr protein kinase family.

The protein resides in the virion. Its subcellular location is the host cytoplasm. It carries out the reaction L-seryl-[protein] + ATP = O-phospho-L-seryl-[protein] + ADP + H(+). The enzyme catalyses L-threonyl-[protein] + ATP = O-phospho-L-threonyl-[protein] + ADP + H(+). Its function is as follows. Essential for viral replication. It may mediate the virus progression through DNA replication. The polypeptide is Serine/threonine-protein kinase 1 (African swine fever virus (isolate Pig/Kenya/KEN-50/1950) (ASFV)).